Reading from the N-terminus, the 285-residue chain is Small ribosomal subunit protein mS23 (285 aa).

This sequence belongs to the mitochondrion-specific ribosomal protein mS23 family. In terms of assembly, component of the mitochondrial small ribosomal subunit.

The protein localises to the mitochondrion. The chain is Small ribosomal subunit protein mS23 (RSM25) from Debaryomyces hansenii (strain ATCC 36239 / CBS 767 / BCRC 21394 / JCM 1990 / NBRC 0083 / IGC 2968) (Yeast).